The primary structure comprises 578 residues: Proline--tRNA ligase (578 aa).

Belongs to the class-II aminoacyl-tRNA synthetase family. ProS type 1 subfamily. In terms of assembly, homodimer.

Its subcellular location is the cytoplasm. The enzyme catalyses tRNA(Pro) + L-proline + ATP = L-prolyl-tRNA(Pro) + AMP + diphosphate. Catalyzes the attachment of proline to tRNA(Pro) in a two-step reaction: proline is first activated by ATP to form Pro-AMP and then transferred to the acceptor end of tRNA(Pro). As ProRS can inadvertently accommodate and process non-cognate amino acids such as alanine and cysteine, to avoid such errors it has two additional distinct editing activities against alanine. One activity is designated as 'pretransfer' editing and involves the tRNA(Pro)-independent hydrolysis of activated Ala-AMP. The other activity is designated 'posttransfer' editing and involves deacylation of mischarged Ala-tRNA(Pro). The misacylated Cys-tRNA(Pro) is not edited by ProRS. The polypeptide is Proline--tRNA ligase (Burkholderia multivorans (strain ATCC 17616 / 249)).